The following is a 124-amino-acid chain: Acidic phospholipase A2 (124 aa).

7 disulfides stabilise this stretch: Cys26–Cys117, Cys28–Cys44, Cys43–Cys97, Cys49–Cys124, Cys50–Cys90, Cys57–Cys83, and Cys77–Cys88. Ca(2+)-binding residues include Tyr27, Gly29, and Gly31. His47 is a catalytic residue. Asp48 lines the Ca(2+) pocket. Glu89 is a catalytic residue.

The protein belongs to the phospholipase A2 family. Group II subfamily. D49 sub-subfamily. Ca(2+) serves as cofactor. As to expression, expressed by the venom gland.

The protein resides in the secreted. It catalyses the reaction a 1,2-diacyl-sn-glycero-3-phosphocholine + H2O = a 1-acyl-sn-glycero-3-phosphocholine + a fatty acid + H(+). Functionally, snake venom phospholipase A2 (PLA2) that inhibits collagen- and ADP-induced platelet aggregation. PLA2 catalyzes the calcium-dependent hydrolysis of the 2-acyl groups in 3-sn-phosphoglycerides. The polypeptide is Acidic phospholipase A2 (Bothrops jararaca (Jararaca)).